Here is a 452-residue protein sequence, read N- to C-terminus: Maltoporin (452 aa).

The first 25 residues, 1–25 (MMITLRKLPLAVAVAAGVMSAQAMA), serve as a signal peptide directing secretion.

This sequence belongs to the porin LamB (TC 1.B.3) family. As to quaternary structure, homotrimer formed of three 18-stranded antiparallel beta-barrels, containing three independent channels.

It localises to the cell outer membrane. It carries out the reaction beta-maltose(in) = beta-maltose(out). Its function is as follows. Involved in the transport of maltose and maltodextrins. This chain is Maltoporin, found in Salmonella enteritidis PT4 (strain P125109).